The chain runs to 168 residues: Peroxynitrite isomerase (168 aa).

The GXWXGXG signature appears at 25–31 (GTWRGAG). Residue H160 coordinates heme b.

The protein belongs to the nitrobindin family. Homodimer. Requires heme b as cofactor.

It catalyses the reaction peroxynitrite = nitrate. The protein operates within nitrogen metabolism. Heme-binding protein able to scavenge peroxynitrite and to protect free L-tyrosine against peroxynitrite-mediated nitration, by acting as a peroxynitrite isomerase that converts peroxynitrite to nitrate. Therefore, this protein likely plays a role in peroxynitrite sensing and in the detoxification of reactive nitrogen and oxygen species (RNS and ROS, respectively). Is able to bind nitric oxide (NO) in vitro, but may act as a sensor of peroxynitrite levels in vivo. The polypeptide is Peroxynitrite isomerase (Nocardia farcinica (strain IFM 10152)).